The primary structure comprises 98 residues: NADH-ubiquinone oxidoreductase chain 4L (98 aa).

Transmembrane regions (helical) follow at residues 1-21 (MTSI…GVLV), 28-48 (STLL…ALLI), and 59-79 (APLI…ALLV).

Belongs to the complex I subunit 4L family. In terms of assembly, core subunit of respiratory chain NADH dehydrogenase (Complex I) which is composed of 45 different subunits.

It is found in the mitochondrion inner membrane. It catalyses the reaction a ubiquinone + NADH + 5 H(+)(in) = a ubiquinol + NAD(+) + 4 H(+)(out). Functionally, core subunit of the mitochondrial membrane respiratory chain NADH dehydrogenase (Complex I) which catalyzes electron transfer from NADH through the respiratory chain, using ubiquinone as an electron acceptor. Part of the enzyme membrane arm which is embedded in the lipid bilayer and involved in proton translocation. The protein is NADH-ubiquinone oxidoreductase chain 4L (MT-ND4L) of Dactylopsila trivirgata (Striped possum).